The primary structure comprises 452 residues: LIM/homeobox protein lim-7 (452 aa).

LIM zinc-binding domains are found at residues 54–116 and 117–179; these read AVCA…LFTT and RCSR…LDNP. Residues 184–268 are disordered; sequence SVPDYSKLNN…KKKDKQATRV (85 aa). 2 stretches are compositionally biased toward low complexity: residues 192–205 and 217–227; these read NNNN…SSSN and TLTSLDNNTSS. A DNA-binding region (homeobox) is located at residues 265 to 324; sequence ATRVRTVLNENQLKILRDCYSINSRPDATLKERLVEMTGLSARVIRVWFQNKRCKDKKRQ. The interval 347–376 is LIM interaction domain (LID); it reads GIGPLMVQPATPHIDNTLGGPIDIQHFAQW.

In terms of assembly, interacts (via LID domain) with ceh-14 (via LIM zinc-binding domains 1 and 2). As to expression, expressed in gonadal sheath cells, URA motoneurons, and 10 additional cells near the isthmus and terminal bulb of the pharynx. Expressed in the ALA and BDU cells.

It localises to the nucleus. In terms of biological role, probable DNA-binding transcriptional activator. This Caenorhabditis elegans protein is LIM/homeobox protein lim-7.